We begin with the raw amino-acid sequence, 61 residues long: MDPNCSCSTGSSCSCAGSCTCKACRCPSCKKSCCSCCPVGCAKCAQGCICKGASDKCSCCA.

Residues 1–29 (MDPNCSCSTGSSCSCAGSCTCKACRCPSC) are beta. Residues C5, C7, C13, C15, C19, C21, C24, C26, C29, C33, C34, C36, C37, C41, C44, C48, C50, C57, C59, and C60 each contribute to the a divalent metal cation site. The interval 30–61 (KKSCCSCCPVGCAKCAQGCICKGASDKCSCCA) is alpha.

This sequence belongs to the metallothionein superfamily. Type 1 family.

In terms of biological role, metallothioneins have a high content of cysteine residues that bind various heavy metals; these proteins are transcriptionally regulated by both heavy metals and glucocorticoids. The protein is Metallothionein-1C (MT1C) of Ovis aries (Sheep).